We begin with the raw amino-acid sequence, 487 residues long: MSLSTVNHAAAAAAAAGSGKSFSAAAPAAPSVRLPRTRAPAAAAVSAAAVGADRAADRVSALSQVSGVLGSQWGDEGKGKLVDVLAPRFDIVARCQGGANAGHTIYNSEGKKFALHLVPSGILHEGTLCVVGNGAVIHVPGFFNEIDGLESNGVNCNGRILVSDRAHLLFDLHQAVDGLREAELANSFIGTTKRGIGPCYSSKVTRNGLRVCDLRHMDTFGDKLDVLFKDAASRFEGFEYSKSMLREEVERYKRFAERLEPFIADTVHVLNESIQQKKKILVEGGQATMLDIDFGTYPFVTSSSPSAGGICTGLGIAPRCIGDLIGVVKAYTTRVGSGPFPTELFGEEGDLLRKSGMEFGTTTGRPRRCGWLDIVALKYCCEINGFSSLNLTKLDVLSGLPEVKLGVSYNQPDGQKLQSFPGDLDILEQVQVKYEVLPGWQSDISSVRSYSELPLAAQRYVERIEDLVGVPVHYIGVGPGRDALIYK.

Residues 1–46 (MSLSTVNHAAAAAAAAGSGKSFSAAAPAAPSVRLPRTRAPAAAAVS) constitute a chloroplast transit peptide. GTP-binding positions include 74-80 (GDEGKGK) and 102-104 (GHT). D75 (proton acceptor) is an active-site residue. 2 residues coordinate Mg(2+): D75 and G102. Residues 75–78 (DEGK), 100–103 (NAGH), T192, R206, Q286, T301, and R365 contribute to the IMP site. H103 (proton donor) is an active-site residue. Residue 361 to 367 (TTTGRPR) participates in substrate binding. Residues R367, 393 to 395 (KLD), and 476 to 478 (GVG) each bind GTP.

The protein belongs to the adenylosuccinate synthetase family. As to quaternary structure, homodimer. Requires Mg(2+) as cofactor.

It localises to the plastid. Its subcellular location is the chloroplast. The catalysed reaction is IMP + L-aspartate + GTP = N(6)-(1,2-dicarboxyethyl)-AMP + GDP + phosphate + 2 H(+). The protein operates within purine metabolism; AMP biosynthesis via de novo pathway; AMP from IMP: step 1/2. In terms of biological role, plays an important role in the de novo pathway and in the salvage pathway of purine nucleotide biosynthesis. Catalyzes the first committed step in the biosynthesis of AMP from IMP. This Oryza sativa subsp. indica (Rice) protein is Adenylosuccinate synthetase, chloroplastic.